Reading from the N-terminus, the 119-residue chain is uncharacterized protein (119 aa).

Its subcellular location is the mitochondrion. It is found in the nucleus. This is an uncharacterized protein from Schizosaccharomyces pombe (strain 972 / ATCC 24843) (Fission yeast).